A 778-amino-acid polypeptide reads, in one-letter code: IQ domain-containing protein E (778 aa).

Disordered stretches follow at residues 1–71 (MSLG…LSSR) and 83–108 (SSKQ…HPPS). A compositionally biased stretch (low complexity) spans 37–49 (KPPSTSPKSPYYS). The segment covering 83–101 (SSKQGSVAQPPSPTLTSEH) has biased composition (polar residues). Residues 157–323 (LHMQKSDVDL…DLDRMLSNSP (167 aa)) are a coiled coil. Ser322 is subject to Phosphoserine. Disordered regions lie at residues 348–392 (KKVS…EDLP), 443–462 (ETAR…LREE), 474–529 (EEAK…SEER), and 573–612 (LVRS…AEEN). Positions 352–362 (SSESPKQSTSE) are enriched in low complexity. Positions 398-486 (EEQEHLQGTV…KREEKNSFVA (89 aa)) form a coiled coil. IQ domains follow at residues 553 to 582 (LDEA…PDSR) and 615 to 644 (QEEA…REIA). Positions 581 to 598 (SRSPSLPGLLSPLNQSSP) are enriched in low complexity. The segment covering 651–662 (TVSLTPSGSASP) has biased composition (polar residues). A disordered region spans residues 651-778 (TVSLTPSGSA…LPRKKSPSPF (128 aa)). Phosphoserine is present on Ser661. The segment covering 672 to 686 (IRKELCASEELRETS) has biased composition (basic and acidic residues). Residues 739–752 (PSPPELQPLSPPPV) are compositionally biased toward pro residues.

As to quaternary structure, component of the EvC complex composed of EFCAB7, IQCE, EVC2 and EVC; built from two subcomplexes, EVC2:EVC and EFCAB7:IQCE. Interacts (via N-terminus) with EFCAB7 (via EF-hands 1 and 2); this interaction anchors the EVC-EVC2 complex in a signaling microdomain at the base of cilia and stimulates the Hedgehog (Hh) pathway. Interacts with EVC2 (via N-terminal end). Interacts with EVC.

It localises to the cell projection. Its subcellular location is the cilium membrane. Component of the EvC complex that positively regulates ciliary Hedgehog (Hh) signaling. Required for proper limb morphogenesis. The protein is IQ domain-containing protein E (Iqce) of Mus musculus (Mouse).